A 189-amino-acid chain; its full sequence is NADH-quinone oxidoreductase subunit B (189 aa).

[4Fe-4S] cluster-binding residues include cysteine 39, cysteine 40, cysteine 104, and cysteine 135.

It belongs to the complex I 20 kDa subunit family. As to quaternary structure, NDH-1 is composed of 14 different subunits. Subunits NuoB, C, D, E, F, and G constitute the peripheral sector of the complex. Requires [4Fe-4S] cluster as cofactor.

It localises to the cell inner membrane. The enzyme catalyses a quinone + NADH + 5 H(+)(in) = a quinol + NAD(+) + 4 H(+)(out). Functionally, NDH-1 shuttles electrons from NADH, via FMN and iron-sulfur (Fe-S) centers, to quinones in the respiratory chain. The immediate electron acceptor for the enzyme in this species is believed to be a menaquinone. Couples the redox reaction to proton translocation (for every two electrons transferred, four hydrogen ions are translocated across the cytoplasmic membrane), and thus conserves the redox energy in a proton gradient. The polypeptide is NADH-quinone oxidoreductase subunit B (Chlorobium luteolum (strain DSM 273 / BCRC 81028 / 2530) (Pelodictyon luteolum)).